The chain runs to 187 residues: Small ribosomal subunit protein uS7 (187 aa).

The protein belongs to the universal ribosomal protein uS7 family. As to quaternary structure, part of the 30S ribosomal subunit.

One of the primary rRNA binding proteins, it binds directly to 16S rRNA where it nucleates assembly of the head domain of the 30S subunit. Is located at the subunit interface close to the decoding center. This Methanosphaera stadtmanae (strain ATCC 43021 / DSM 3091 / JCM 11832 / MCB-3) protein is Small ribosomal subunit protein uS7.